The chain runs to 78 residues: Putative snRNP Sm-like protein (78 aa).

Positions 4–76 constitute a Sm domain; it reads RPLDVIHRSL…VLAISPVDVG (73 aa).

It belongs to the snRNP Sm proteins family.

This is Putative snRNP Sm-like protein from Thermococcus onnurineus (strain NA1).